A 297-amino-acid chain; its full sequence is Ribonuclease H2 subunit A (297 aa).

In terms of domain architecture, RNase H type-2 spans 21–248 (PCVLGIDEAG…ASTIVEKRCV (228 aa)). A divalent metal cation-binding residues include Asp-27, Glu-28, and Asp-138.

Belongs to the RNase HII family. Eukaryotic subfamily. It depends on Mn(2+) as a cofactor. Mg(2+) serves as cofactor.

It catalyses the reaction Endonucleolytic cleavage to 5'-phosphomonoester.. Its function is as follows. Catalytic subunit of RNase HII, an endonuclease that specifically degrades the RNA of RNA:DNA hybrids. Participates in DNA replication, possibly by mediating the removal of lagging-strand Okazaki fragment RNA primers during DNA replication. Mediates the excision of single ribonucleotides from DNA:RNA duplexes. The sequence is that of Ribonuclease H2 subunit A (rnh-2) from Caenorhabditis elegans.